The sequence spans 593 residues: Isocitrate dehydrogenase kinase/phosphatase (593 aa).

Residues 324 to 330 and Lys-345 each bind ATP; that span reads APGIRGL. Asp-380 is a catalytic residue.

The protein belongs to the AceK family.

It is found in the cytoplasm. The catalysed reaction is L-seryl-[isocitrate dehydrogenase] + ATP = O-phospho-L-seryl-[isocitrate dehydrogenase] + ADP + H(+). In terms of biological role, bifunctional enzyme which can phosphorylate or dephosphorylate isocitrate dehydrogenase (IDH) on a specific serine residue. This is a regulatory mechanism which enables bacteria to bypass the Krebs cycle via the glyoxylate shunt in response to the source of carbon. When bacteria are grown on glucose, IDH is fully active and unphosphorylated, but when grown on acetate or ethanol, the activity of IDH declines drastically concomitant with its phosphorylation. The chain is Isocitrate dehydrogenase kinase/phosphatase from Dechloromonas aromatica (strain RCB).